We begin with the raw amino-acid sequence, 635 residues long: Leucine aminopeptidase 2-2 (635 aa).

Residues 141-143 (QCQ) and 265-270 (PYGGME) each bind substrate. H294 is a binding site for Zn(2+). E295 serves as the catalytic Proton acceptor. The Zn(2+) site is built by H298 and E317. Y399 serves as the catalytic Proton donor.

The protein belongs to the peptidase M1 family. Zn(2+) serves as cofactor.

The protein resides in the cytoplasm. The protein localises to the nucleus. The catalysed reaction is an epoxide + H2O = an ethanediol. Aminopeptidase that preferentially cleaves di- and tripeptides. Also has low epoxide hydrolase activity (in vitro). Can hydrolyze the epoxide leukotriene LTA(4) but it forms preferentially 5,6-dihydroxy-7,9,11,14-eicosatetraenoic acid rather than the cytokine leukotriene B(4) as the product compared to the homologous mammalian enzyme (in vitro). The sequence is that of Leucine aminopeptidase 2-2 (LTA4) from Scheffersomyces stipitis (strain ATCC 58785 / CBS 6054 / NBRC 10063 / NRRL Y-11545) (Yeast).